The primary structure comprises 498 residues: Angiopoietin-1 (498 aa).

The signal sequence occupies residues 1–15; the sequence is MTVFLSFAFLAAILT. Residues 81–119 are a coiled coil; that stretch reads QKLQHLEHVMENYTQWLQKLENYIVENMKSEMAQIQQNA. Residues Asn-92, Asn-122, Asn-154, Asn-243, and Asn-295 are each glycosylated (N-linked (GlcNAc...) asparagine). Residues 153-261 adopt a coiled-coil conformation; that stretch reads LNQTSRLEIQ…LELMDTVHNL (109 aa). Positions 277–497 constitute a Fibrinogen C-terminal domain; it reads REEEKPFRDC…STTMMIRPLD (221 aa). 2 disulfides stabilise this stretch: Cys-286–Cys-315 and Cys-439–Cys-452.

Homooligomer. Interacts with TEK/TIE2. Interacts with SVEP1/polydom. Interacts with THBD; this interaction significantly inhibits the generation of activated PC and TAFIa/CPB2 by the thrombin/thrombomodulin complex. In terms of processing, glycosylated.

It localises to the secreted. In terms of biological role, binds and activates TEK/TIE2 receptor by inducing its dimerization and tyrosine phosphorylation. Plays an important role in the regulation of angiogenesis, endothelial cell survival, proliferation, migration, adhesion and cell spreading, reorganization of the actin cytoskeleton, but also maintenance of vascular quiescence. Required for normal angiogenesis and heart development during embryogenesis. After birth, activates or inhibits angiogenesis, depending on the context. Inhibits angiogenesis and promotes vascular stability in quiescent vessels, where endothelial cells have tight contacts. In quiescent vessels, ANGPT1 oligomers recruit TEK to cell-cell contacts, forming complexes with TEK molecules from adjoining cells, and this leads to preferential activation of phosphatidylinositol 3-kinase and the AKT1 signaling cascades. In migrating endothelial cells that lack cell-cell adhesions, ANGT1 recruits TEK to contacts with the extracellular matrix, leading to the formation of focal adhesion complexes, activation of PTK2/FAK and of the downstream kinases MAPK1/ERK2 and MAPK3/ERK1, and ultimately to the stimulation of sprouting angiogenesis. Mediates blood vessel maturation/stability. Implicated in endothelial developmental processes later and distinct from that of VEGF. Appears to play a crucial role in mediating reciprocal interactions between the endothelium and surrounding matrix and mesenchyme. The sequence is that of Angiopoietin-1 (ANGPT1) from Homo sapiens (Human).